A 257-amino-acid chain; its full sequence is 4-hydroxy-tetrahydrodipicolinate reductase (257 aa).

NAD(+) is bound by residues 7–12, Asp-32, 91–93, and 115–118; these read GAAGRM, GTT, and SPNF. Catalysis depends on His-147, which acts as the Proton donor/acceptor. His-148 contacts (S)-2,3,4,5-tetrahydrodipicolinate. Catalysis depends on Lys-151, which acts as the Proton donor. 157 to 158 provides a ligand contact to (S)-2,3,4,5-tetrahydrodipicolinate; that stretch reads GT.

It belongs to the DapB family.

It is found in the cytoplasm. It catalyses the reaction (S)-2,3,4,5-tetrahydrodipicolinate + NAD(+) + H2O = (2S,4S)-4-hydroxy-2,3,4,5-tetrahydrodipicolinate + NADH + H(+). The catalysed reaction is (S)-2,3,4,5-tetrahydrodipicolinate + NADP(+) + H2O = (2S,4S)-4-hydroxy-2,3,4,5-tetrahydrodipicolinate + NADPH + H(+). The protein operates within amino-acid biosynthesis; L-lysine biosynthesis via DAP pathway; (S)-tetrahydrodipicolinate from L-aspartate: step 4/4. In terms of biological role, catalyzes the conversion of 4-hydroxy-tetrahydrodipicolinate (HTPA) to tetrahydrodipicolinate. The chain is 4-hydroxy-tetrahydrodipicolinate reductase from Archaeoglobus fulgidus (strain ATCC 49558 / DSM 4304 / JCM 9628 / NBRC 100126 / VC-16).